Reading from the N-terminus, the 464-residue chain is NADH-ubiquinone oxidoreductase chain 4 (464 aa).

Transmembrane regions (helical) follow at residues 1–21, 63–83, 98–118, 119–139, 152–172, 197–217, 227–247, 261–281, 288–308, 314–334, 355–375, 389–409, and 443–463; these read MMIT…VIPQ, SISA…LIAS, FIII…ALEL, LLFY…ITRW, FMFY…AIYI, IWWA…GFHL, PVAG…YGLI, LSLA…IICV, ALIA…IFSS, NGAL…FSLA, ILPL…GLPP, LIAW…FGAI, and LHTL…ITWL.

The protein belongs to the complex I subunit 4 family.

The protein localises to the mitochondrion membrane. The catalysed reaction is a ubiquinone + NADH + 5 H(+)(in) = a ubiquinol + NAD(+) + 4 H(+)(out). Its function is as follows. Core subunit of the mitochondrial membrane respiratory chain NADH dehydrogenase (Complex I) that is believed to belong to the minimal assembly required for catalysis. Complex I functions in the transfer of electrons from NADH to the respiratory chain. The immediate electron acceptor for the enzyme is believed to be ubiquinone. The polypeptide is NADH-ubiquinone oxidoreductase chain 4 (ND4) (Paracentrotus lividus (Common sea urchin)).